The primary structure comprises 365 residues: Ribosomal RNA large subunit methyltransferase F (365 aa).

The interval 1–50 (MSKPAVKSVPSATAKTATRAVNIRQKVKAPKQAKPEAKGRAKPSKDKPRA) is disordered. The span at 33–50 (AKPEAKGRAKPSKDKPRA) shows a compositional bias: basic and acidic residues.

The protein belongs to the methyltransferase superfamily. METTL16/RlmF family.

The protein resides in the cytoplasm. The catalysed reaction is adenosine(1618) in 23S rRNA + S-adenosyl-L-methionine = N(6)-methyladenosine(1618) in 23S rRNA + S-adenosyl-L-homocysteine + H(+). In terms of biological role, specifically methylates the adenine in position 1618 of 23S rRNA. This chain is Ribosomal RNA large subunit methyltransferase F, found in Shewanella baltica (strain OS155 / ATCC BAA-1091).